Consider the following 189-residue polypeptide: MVRRLIIGISGASGFQYGVKALELLRAQDVETHLVVSKGAEMARASETAYARDEVYALADFVHPIGNIGACIASGTFKTDGMLVAPCSMRTLASVAHGFGDNLLTRAADVVLKERRRLVLMVRETPLNLAHLDNMKRVTEMGGVVFPPVPAMYRKPQTADDIVAHSVAHALSLFGIDTPDSAEWQGMAD.

Residues 11 to 13 (GAS), Ser37, 88 to 91 (SMRT), and Arg123 contribute to the FMN site. Tyr153 is a dimethylallyl phosphate binding site.

The protein belongs to the UbiX/PAD1 family.

It catalyses the reaction dimethylallyl phosphate + FMNH2 = prenylated FMNH2 + phosphate. Flavin prenyltransferase that catalyzes the synthesis of the prenylated FMN cofactor (prenyl-FMN) for 4-hydroxy-3-polyprenylbenzoic acid decarboxylase UbiD. The prenyltransferase is metal-independent and links a dimethylallyl moiety from dimethylallyl monophosphate (DMAP) to the flavin N5 and C6 atoms of FMN. The polypeptide is Flavin prenyltransferase UbiX (Neisseria meningitidis serogroup B (strain ATCC BAA-335 / MC58)).